The following is a 363-amino-acid chain: Forkhead box protein I1 (363 aa).

Over residues 1–18 the composition is skewed to low complexity; sequence MNPVQQPAQQRSPASSLP. 3 disordered regions span residues 1 to 24, 210 to 269, and 344 to 363; these read MNPV…KRAQ, DNGN…SPPA, and TTAQ…QGRY. Residues 125–219 constitute a DNA-binding region (fork-head); sequence RPPYSYSALI…DNGNFRRKRK (95 aa). A compositionally biased stretch (basic and acidic residues) spans 231–243; sequence KIGEDHLNPKGKE. Low complexity-rich tracts occupy residues 244–258 and 347–363; these read SPPM…EPSP and QKQP…QGRY.

The protein resides in the nucleus. Functionally, transcription factor. Essential for ventral specification of the early cephalic (head) ectoderm during gastrulation, playing a role in the 'non-neural' versus 'neural' cell fate choice. Binds to DNA via the target sequence 5'-[AG]TAAA[CT]A-3', with 5'-ATAAACA-3' being the preferred binding site. In Xenopus tropicalis (Western clawed frog), this protein is Forkhead box protein I1.